Here is a 569-residue protein sequence, read N- to C-terminus: Proline--tRNA ligase (569 aa).

This sequence belongs to the class-II aminoacyl-tRNA synthetase family. ProS type 1 subfamily. In terms of assembly, homodimer.

The protein localises to the cytoplasm. It catalyses the reaction tRNA(Pro) + L-proline + ATP = L-prolyl-tRNA(Pro) + AMP + diphosphate. In terms of biological role, catalyzes the attachment of proline to tRNA(Pro) in a two-step reaction: proline is first activated by ATP to form Pro-AMP and then transferred to the acceptor end of tRNA(Pro). As ProRS can inadvertently accommodate and process non-cognate amino acids such as alanine and cysteine, to avoid such errors it has two additional distinct editing activities against alanine. One activity is designated as 'pretransfer' editing and involves the tRNA(Pro)-independent hydrolysis of activated Ala-AMP. The other activity is designated 'posttransfer' editing and involves deacylation of mischarged Ala-tRNA(Pro). The misacylated Cys-tRNA(Pro) is not edited by ProRS. The polypeptide is Proline--tRNA ligase (Nitrosospira multiformis (strain ATCC 25196 / NCIMB 11849 / C 71)).